Here is a 29-residue protein sequence, read N- to C-terminus: Cysteine-rich venom protein 25-A (29 aa).

It belongs to the CRISP family. Contains 8 disulfide bonds. In terms of tissue distribution, expressed by the venom gland.

The protein localises to the secreted. This Naja haje haje (Egyptian cobra) protein is Cysteine-rich venom protein 25-A.